Reading from the N-terminus, the 139-residue chain is Small ribosomal subunit protein uS12 (139 aa).

A disordered region spans residues 119–139; it reads GVDKRRQQRSAYGAKKPKPKS.

The protein belongs to the universal ribosomal protein uS12 family. Part of the 30S ribosomal subunit. Contacts proteins S8 and S17. May interact with IF1 in the 30S initiation complex.

With S4 and S5 plays an important role in translational accuracy. In terms of biological role, interacts with and stabilizes bases of the 16S rRNA that are involved in tRNA selection in the A site and with the mRNA backbone. Located at the interface of the 30S and 50S subunits, it traverses the body of the 30S subunit contacting proteins on the other side and probably holding the rRNA structure together. The combined cluster of proteins S8, S12 and S17 appears to hold together the shoulder and platform of the 30S subunit. The protein is Small ribosomal subunit protein uS12 of Mycoplasma genitalium (strain ATCC 33530 / DSM 19775 / NCTC 10195 / G37) (Mycoplasmoides genitalium).